Reading from the N-terminus, the 483-residue chain is Uridine/cytidine kinase UKL1, chloroplastic (483 aa).

The transit peptide at 1–47 directs the protein to the chloroplast; it reads MPEDSTAIDYVMEKASGPHFSGLRLDGLLSSPSKSSVSSPSHFRLSN. Positions 59–264 are uridine kinase; sequence PHQPFVIGVT…IVQHIHTKLG (206 aa). The interval 274 to 483 is uracil phosphoribosyltransferase; that stretch reads NVFVIETTFQ…FGDRYFGTDE (210 aa). Residues lysine 298, arginine 307, and 341 to 344 each bind GTP; that span reads CKKL. 2 residues coordinate 5-phospho-alpha-D-ribose 1-diphosphate: arginine 351 and arginine 376. Arginine 396 is a binding site for GTP. Residues aspartate 402, 407–410, and glutamate 473 contribute to the 5-phospho-alpha-D-ribose 1-diphosphate site; that span reads TGNS. 472–474 contributes to the uracil binding site; sequence GEF.

In the N-terminal section; belongs to the uridine kinase family. The protein in the C-terminal section; belongs to the UPRTase family.

The protein resides in the plastid. It localises to the chloroplast. It carries out the reaction cytidine + ATP = CMP + ADP + H(+). The enzyme catalyses uridine + ATP = UMP + ADP + H(+). It participates in pyrimidine metabolism; CTP biosynthesis via salvage pathway; CTP from cytidine: step 1/3. Its pathway is pyrimidine metabolism; UMP biosynthesis via salvage pathway; UMP from uridine: step 1/1. In terms of biological role, involved in the pyrimidine salvage pathway. Phosphorylates uridine to uridine monophosphate (UMP). Phosphorylates cytidine to cytidine monophosphate (CMP). Does not possess uracil phosphoribosyltransferase (UPRTase) activity that catalyzes the conversion of uracil and 5-phospho-alpha-D-ribose 1-diphosphate (PRPP) to UMP and diphosphate. This is Uridine/cytidine kinase UKL1, chloroplastic from Arabidopsis thaliana (Mouse-ear cress).